A 335-amino-acid polypeptide reads, in one-letter code: Ferrochelatase (335 aa).

Fe cation is bound by residues H211 and E290.

It belongs to the ferrochelatase family.

The protein resides in the cytoplasm. The enzyme catalyses heme b + 2 H(+) = protoporphyrin IX + Fe(2+). It participates in porphyrin-containing compound metabolism; protoheme biosynthesis; protoheme from protoporphyrin-IX: step 1/1. Functionally, catalyzes the ferrous insertion into protoporphyrin IX. This Sulfurihydrogenibium sp. (strain YO3AOP1) protein is Ferrochelatase.